Reading from the N-terminus, the 144-residue chain is 3-dehydroquinate dehydratase (144 aa).

Tyr-22 acts as the Proton acceptor in catalysis. Asn-73, His-79, and Asp-86 together coordinate substrate. His-99 functions as the Proton donor in the catalytic mechanism. Residues 100–101 and Arg-110 each bind substrate; that span reads LS.

Belongs to the type-II 3-dehydroquinase family. As to quaternary structure, homododecamer.

The enzyme catalyses 3-dehydroquinate = 3-dehydroshikimate + H2O. The protein operates within metabolic intermediate biosynthesis; chorismate biosynthesis; chorismate from D-erythrose 4-phosphate and phosphoenolpyruvate: step 3/7. Functionally, catalyzes a trans-dehydration via an enolate intermediate. The polypeptide is 3-dehydroquinate dehydratase (Trichlorobacter lovleyi (strain ATCC BAA-1151 / DSM 17278 / SZ) (Geobacter lovleyi)).